Here is an 80-residue protein sequence, read N- to C-terminus: Large ribosomal subunit protein bL28 (80 aa).

The tract at residues 1-23 (MARVCQITGKKTRTGNNVSHANN) is disordered.

The protein belongs to the bacterial ribosomal protein bL28 family.

The chain is Large ribosomal subunit protein bL28 from Cytophaga hutchinsonii (strain ATCC 33406 / DSM 1761 / CIP 103989 / NBRC 15051 / NCIMB 9469 / D465).